Here is a 434-residue protein sequence, read N- to C-terminus: Protein HEAT INTOLERANT 4 (434 aa).

The short motif at 1 to 8 (MKKGAKRK) is the Nuclear localization signal 1 element. Basic residues predominate over residues 1-15 (MKKGAKRKGVSKAGR). The tract at residues 1–131 (MKKGAKRKGV…PVPKAKKPRA (131 aa)) is disordered. The segment covering 30–53 (ETTKTTQEESQQHEEEVVDEVKEN) has biased composition (basic and acidic residues). Acidic residues predominate over residues 54-82 (GEEEEAKGDQEEEEDAKPDSLEEDEENQE). Over residues 83–98 (DEVKAEEVKEEVEKKP) the composition is skewed to basic and acidic residues. The short motif at 95–102 (EKKPVARR) is the Nuclear localization signal 2 element. Residues 99-110 (VARRGGKRKRAT) are compositionally biased toward basic residues. Over residues 111–122 (KKDTEIKDEKKP) the composition is skewed to basic and acidic residues. Residues 363-394 (VKEQVRAAKKANREAKDARKKAIEEMSEDTKQ) are a coiled coil. Residues 370 to 377 (AKKANREA) carry the Nuclear localization signal 3 motif.

The protein resides in the nucleus. The protein localises to the nucleolus. Its function is as follows. Essential protein required for basal thermotolerance, especially during heat-induced chromocentre decondensation, thus regulating transcriptional gene silencing (TGS). The sequence is that of Protein HEAT INTOLERANT 4 from Arabidopsis thaliana (Mouse-ear cress).